Consider the following 318-residue polypeptide: tRNA-cytidine(32) 2-sulfurtransferase (318 aa).

Positions 65 to 70 match the PP-loop motif motif; sequence SGGKDS. Positions 140, 143, and 231 each coordinate [4Fe-4S] cluster.

This sequence belongs to the TtcA family. Homodimer. Mg(2+) serves as cofactor. [4Fe-4S] cluster is required as a cofactor.

It localises to the cytoplasm. It carries out the reaction cytidine(32) in tRNA + S-sulfanyl-L-cysteinyl-[cysteine desulfurase] + AH2 + ATP = 2-thiocytidine(32) in tRNA + L-cysteinyl-[cysteine desulfurase] + A + AMP + diphosphate + H(+). It participates in tRNA modification. Functionally, catalyzes the ATP-dependent 2-thiolation of cytidine in position 32 of tRNA, to form 2-thiocytidine (s(2)C32). The sulfur atoms are provided by the cysteine/cysteine desulfurase (IscS) system. This is tRNA-cytidine(32) 2-sulfurtransferase from Herminiimonas arsenicoxydans.